An 826-amino-acid chain; its full sequence is Putative pentatricopeptide repeat-containing protein At1g13630 (826 aa).

16 PPR repeats span residues Asn228–Pro262, Ser263–Pro297, Ser298–Pro332, Asp333–Pro367, Asp368–Leu402, Ser404–Pro438, Asp439–Pro473, Asn474–Leu508, Asp509–Pro543, Ser544–Pro578, Ser579–Pro613, Thr614–Gln648, Asp661–Ala695, Ser696–Leu730, Ser731–Val765, and Ser766–Pro800.

It belongs to the PPR family. P subfamily.

The chain is Putative pentatricopeptide repeat-containing protein At1g13630 from Arabidopsis thaliana (Mouse-ear cress).